Here is a 238-residue protein sequence, read N- to C-terminus: Ribonuclease PH (238 aa).

Residues arginine 86 and 124-126 each bind phosphate; that span reads GTR.

Belongs to the RNase PH family. As to quaternary structure, homohexameric ring arranged as a trimer of dimers.

It carries out the reaction tRNA(n+1) + phosphate = tRNA(n) + a ribonucleoside 5'-diphosphate. In terms of biological role, phosphorolytic 3'-5' exoribonuclease that plays an important role in tRNA 3'-end maturation. Removes nucleotide residues following the 3'-CCA terminus of tRNAs; can also add nucleotides to the ends of RNA molecules by using nucleoside diphosphates as substrates, but this may not be physiologically important. Probably plays a role in initiation of 16S rRNA degradation (leading to ribosome degradation) during starvation. This chain is Ribonuclease PH, found in Shigella dysenteriae serotype 1 (strain Sd197).